Consider the following 557-residue polypeptide: Ribonuclease J 2 (557 aa).

Positions 76, 78, 144, and 166 each coordinate Zn(2+). 366 to 370 (HASSH) is a binding site for substrate.

The protein belongs to the metallo-beta-lactamase superfamily. RNA-metabolizing metallo-beta-lactamase-like family. Bacterial RNase J subfamily. As to quaternary structure, homodimer, may be a subunit of the RNA degradosome. It depends on Zn(2+) as a cofactor.

It localises to the cytoplasm. An RNase that has 5'-3' exonuclease and possibly endoonuclease activity. Involved in maturation of rRNA and in some organisms also mRNA maturation and/or decay. This Staphylococcus epidermidis (strain ATCC 35984 / DSM 28319 / BCRC 17069 / CCUG 31568 / BM 3577 / RP62A) protein is Ribonuclease J 2.